Reading from the N-terminus, the 159-residue chain is Large ribosomal subunit protein uL10 (159 aa).

Belongs to the universal ribosomal protein uL10 family. In terms of assembly, part of the ribosomal stalk of the 50S ribosomal subunit. The N-terminus interacts with L11 and the large rRNA to form the base of the stalk. The C-terminus forms an elongated spine to which L12 dimers bind in a sequential fashion forming a multimeric L10(L12)X complex.

Forms part of the ribosomal stalk, playing a central role in the interaction of the ribosome with GTP-bound translation factors. This chain is Large ribosomal subunit protein uL10 (rplJ), found in Campylobacter jejuni subsp. jejuni serotype O:2 (strain ATCC 700819 / NCTC 11168).